Here is a 418-residue protein sequence, read N- to C-terminus: Phosphopentomutase (418 aa).

Positions 10, 297, 302, 338, 339, and 350 each coordinate Mn(2+).

Belongs to the phosphopentomutase family. Mn(2+) serves as cofactor.

It is found in the cytoplasm. It catalyses the reaction 2-deoxy-alpha-D-ribose 1-phosphate = 2-deoxy-D-ribose 5-phosphate. It carries out the reaction alpha-D-ribose 1-phosphate = D-ribose 5-phosphate. The protein operates within carbohydrate degradation; 2-deoxy-D-ribose 1-phosphate degradation; D-glyceraldehyde 3-phosphate and acetaldehyde from 2-deoxy-alpha-D-ribose 1-phosphate: step 1/2. In terms of biological role, isomerase that catalyzes the conversion of deoxy-ribose 1-phosphate (dRib-1-P) and ribose 1-phosphate (Rib-1-P) to deoxy-ribose 5-phosphate (dRib-5-P) and ribose 5-phosphate (Rib-5-P), respectively. This is Phosphopentomutase from Chromohalobacter salexigens (strain ATCC BAA-138 / DSM 3043 / CIP 106854 / NCIMB 13768 / 1H11).